The chain runs to 370 residues: Chorismate synthase (370 aa).

NADP(+) contacts are provided by R48 and R54. FMN is bound by residues 130-132 (RSS), 242-243 (NA), G287, 302-306 (KPTSS), and R328.

It belongs to the chorismate synthase family. As to quaternary structure, homotetramer. It depends on FMNH2 as a cofactor.

It carries out the reaction 5-O-(1-carboxyvinyl)-3-phosphoshikimate = chorismate + phosphate. It participates in metabolic intermediate biosynthesis; chorismate biosynthesis; chorismate from D-erythrose 4-phosphate and phosphoenolpyruvate: step 7/7. In terms of biological role, catalyzes the anti-1,4-elimination of the C-3 phosphate and the C-6 proR hydrogen from 5-enolpyruvylshikimate-3-phosphate (EPSP) to yield chorismate, which is the branch point compound that serves as the starting substrate for the three terminal pathways of aromatic amino acid biosynthesis. This reaction introduces a second double bond into the aromatic ring system. The protein is Chorismate synthase of Xanthobacter autotrophicus (strain ATCC BAA-1158 / Py2).